Reading from the N-terminus, the 319-residue chain is ATP-dependent 6-phosphofructokinase (319 aa).

Residue G11 participates in ATP binding. 21–25 lines the ADP pocket; sequence RAVVR. ATP-binding positions include 72–73 and 102–105; these read RC and GDGS. D103 is a binding site for Mg(2+). 125-127 provides a ligand contact to substrate; sequence TID. Catalysis depends on D127, which acts as the Proton acceptor. R154 provides a ligand contact to ADP. Substrate contacts are provided by residues R162 and 169–171; that span reads MGR. ADP-binding positions include 185-187, R211, and 213-215; these read GAE and KKH. Residues E222, R243, and 249–252 contribute to the substrate site; that span reads HVQR.

This sequence belongs to the phosphofructokinase type A (PFKA) family. ATP-dependent PFK group I subfamily. Prokaryotic clade 'B1' sub-subfamily. As to quaternary structure, homotetramer. Requires Mg(2+) as cofactor.

The protein localises to the cytoplasm. The catalysed reaction is beta-D-fructose 6-phosphate + ATP = beta-D-fructose 1,6-bisphosphate + ADP + H(+). Its pathway is carbohydrate degradation; glycolysis; D-glyceraldehyde 3-phosphate and glycerone phosphate from D-glucose: step 3/4. With respect to regulation, allosterically activated by ADP and other diphosphonucleosides, and allosterically inhibited by phosphoenolpyruvate. Catalyzes the phosphorylation of D-fructose 6-phosphate to fructose 1,6-bisphosphate by ATP, the first committing step of glycolysis. The polypeptide is ATP-dependent 6-phosphofructokinase (Geobacillus kaustophilus (strain HTA426)).